Consider the following 281-residue polypeptide: Pre T-cell antigen receptor alpha (281 aa).

A signal peptide spans 1–23; sequence MAGTWLLLLLALGCPALPTGVGG. Topologically, residues 24–146 are extracellular; it reads TPFPSLAPPI…QEPLRGTPGG (123 aa). C47 and C107 are disulfide-bonded. A glycan (N-linked (GlcNAc...) asparagine) is linked at N67. A helical membrane pass occupies residues 147–167; that stretch reads ALWLGVLRLLLFKLLLFDLLL. At 168–281 the chain is on the cytoplasmic side; the sequence is TCSCLCDPAG…LPPPLQAGAA (114 aa). Positions 196 to 233 are disordered; sequence LHPATETGGREATSSPRPQPRDRRWGDTPPGRKPGSPV.

In terms of assembly, heterodimer with TCRB; disulfide linked. This heterodimer assembles with CD3 proteins into a signaling-competent pre-T-cell receptor complex. Interacts with RHBDD1. In terms of tissue distribution, expressed in immature but not mature T-cells. Also found in CD34+ cells from peripheral blood, CD34+ precursors from umbilical cord blood and adult bone marrow.

Its subcellular location is the membrane. The protein resides in the cell membrane. In terms of biological role, component of the pre-T-cell receptor complex (composed of PTCRA, TCRB and the CD3 complex) that has a crucial role in early T-cell development, particularly alpha-beta T cell differentiation. The chain is Pre T-cell antigen receptor alpha from Homo sapiens (Human).